Consider the following 118-residue polypeptide: UPF0382 membrane protein C1782.12c (118 aa).

Positions 1-18 (MTIWNVAALTGLLSVGLG) are cleaved as a signal peptide. Over 19–40 (AYGSHGLQKRVQDPHLLKSWST) the chain is Lumenal. Residues 41-61 (ACTYLMFHSLATMAVSLHPVY) form a helical membrane-spanning segment. Residues 62–67 (GKSRWT) lie on the Cytoplasmic side of the membrane. The helical transmembrane segment at 68 to 88 (GPLLITGSCLFSGTIYGLCLL) threads the bilayer. The Lumenal segment spans residues 89-96 (PKGHSLRR). A helical membrane pass occupies residues 97–117 (ILGPLTPIGGLVMLTGWATML). A topological domain (cytoplasmic) is located at residue Val-118.

The protein belongs to the UPF0382 family.

It localises to the endoplasmic reticulum membrane. The sequence is that of UPF0382 membrane protein C1782.12c from Schizosaccharomyces pombe (strain 972 / ATCC 24843) (Fission yeast).